A 961-amino-acid polypeptide reads, in one-letter code: Probable inorganic carbon transporter subunit DabA (961 aa).

The Zn(2+) site is built by Cys-406, Asp-408, His-653, and Cys-668.

Belongs to the inorganic carbon transporter (TC 9.A.2) DabA family. In terms of assembly, forms a complex with DabB. Zn(2+) serves as cofactor.

It localises to the cell inner membrane. Its function is as follows. Part of an energy-coupled inorganic carbon pump. The chain is Probable inorganic carbon transporter subunit DabA from Hydrogenobaculum sp. (strain Y04AAS1).